A 327-amino-acid chain; its full sequence is uncharacterized protein (327 aa).

A helical transmembrane segment spans residues 12–32 (LVVVVVAIAIFTLVLLMLWEG). Residues 149–170 (AFSAVETSEGSDQESEGADEQG) form a disordered region. Residues 157 to 167 (EGSDQESEGAD) show a composition bias toward acidic residues. Residues 162 to 227 (ESEGADEQGK…LDEENREVAE (66 aa)) are a coiled coil.

It is found in the membrane. This is an uncharacterized protein from Encephalitozoon cuniculi (strain GB-M1) (Microsporidian parasite).